A 701-amino-acid polypeptide reads, in one-letter code: MAQKDVLTDLTKVRNIGIMAHIDAGKTTTTERILYYTGISYKIGEVHDGAATMDWMEQEQERGITITSAATTCFWNDNQINIIDTPGHVDFTVEVERSLRVLDGAVAVFDGKEGVEPQSEQVWRQADKYDVPRICFVNKMDKIGADFYFSVRTMEERLGANVIPIQLPVGSEGDFEGVVDLVEMKAKVWSADAKLGEKYDVVDIPADLQEKADEYRTKLLEAVAETDEALLEKYLGGEELTEAEIKGAIRKLTITSEAYPVLCGSAFKNKGVQPMLDAVIDYLPSPLDVPAAIGHVPGKEDEEVVRKPSTDEPFSALAFKVATHPFFGKLTYVRVYSGKVDSGSQVINSTKGKKERLGKLFQMHSNKESPVETASAGHIYAVIGLKDTTTGDTLSDPNNQIVLESMTFPDPVIEVAIEPKTKSDQEKLSLSIQKLAEEDPTFKVHLDQETGQTVIGGMGELHLDILVDRMRREFKVEANVGKPQVAYKETIKRLVEKVEFTHKKQTGGSGQFAKVLISIEPFTGEDGATYEFESKVTGGRIPREYIPSVDAGAQDAMQYGVLAGYPLVNLKVTLLDGAFHEVDSSEMAFKIAGSQVLKKAAAAAHPVILEPIMAVEVTTPEDYMGDVIGDLNSRRGQIQAMEERSGARVVKAHVPLSEMFGYVGDLRSKTQGRANYSMVFDSYAEVPANVSKEIIAKATGE.

The region spanning Thr-11–Leu-287 is the tr-type G domain. Residues Ala-20–Thr-27, Asp-84–His-88, and Asn-138–Asp-141 each bind GTP.

This sequence belongs to the TRAFAC class translation factor GTPase superfamily. Classic translation factor GTPase family. EF-G/EF-2 subfamily.

The protein localises to the cytoplasm. Catalyzes the GTP-dependent ribosomal translocation step during translation elongation. During this step, the ribosome changes from the pre-translocational (PRE) to the post-translocational (POST) state as the newly formed A-site-bound peptidyl-tRNA and P-site-bound deacylated tRNA move to the P and E sites, respectively. Catalyzes the coordinated movement of the two tRNA molecules, the mRNA and conformational changes in the ribosome. The sequence is that of Elongation factor G from Mycobacterium ulcerans (strain Agy99).